The sequence spans 804 residues: Tubulin polyglutamylase TTLL13 (804 aa).

The disordered stretch occupies residues 1-41 (MEPNNCKTSESEEDDIEEEESEEECVREESTTPNSTQQALR). Positions 4–30 (NNCKTSESEEDDIEEEESEEECVREES) form a coiled coil. Residues 11 to 26 (SEEDDIEEEESEEECV) show a composition bias toward acidic residues. The TTL domain maps to 85–430 (RRPLAINLTN…RGCDKKKVIE (346 aa)). Residues K202, 208-209 (QG), 230-233 (QQYI), and 243-245 (KFD) contribute to the ATP site. Q208 contributes to the a protein binding site. R269 contributes to the L-glutamate binding site. An ATP-binding site is contributed by 291 to 292 (TN). Positions 293 and 311 each coordinate L-glutamate. Mg(2+) is bound by residues D376, E389, and N391. Residue H392 participates in a protein binding. The c-MTBD region stretch occupies residues 401–482 (RLDREVKDAL…LGGYRRIYPG (82 aa)). K407 is an L-glutamate binding site. Coiled-coil stretches lie at residues 504–541 (ASKAREECARQQLEEIRLKQEQQENPGTKKRKENKEQN) and 585–609 (QDIVEEEELERMKLLLQRENLIRSL). The tract at residues 519–556 (IRLKQEQQENPGTKKRKENKEQNQGESAGEKSRSRTAT) is disordered. The span at 536–551 (ENKEQNQGESAGEKSR) shows a compositional bias: basic and acidic residues.

It belongs to the tubulin--tyrosine ligase family. Mg(2+) serves as cofactor. As to expression, highly expressed in heart and testis. Expressed in brain, kidney, liver, lung, muscle and trachea. In the brain, expressed in ependymal cilia, cortex, corpus callosum and striatum.

It carries out the reaction (L-glutamyl)(n)-gamma-L-glutamyl-L-glutamyl-[protein] + L-glutamate + ATP = (L-glutamyl)(n+1)-gamma-L-glutamyl-L-glutamyl-[protein] + ADP + phosphate + H(+). Functionally, polyglutamylase which modifies tubulin, generating polyglutamate side chains of variable lengths on the gamma-carboxyl group of specific glutamate residues within the C-terminal tail of tubulin. Mediates ATP-dependent polyglutamate side-chain elongation of the polyglutamylation reaction but not the initiation step. Preferentially modifies the alpha-tubulin tail over a beta-tail. The sequence is that of Tubulin polyglutamylase TTLL13 from Mus musculus (Mouse).